The chain runs to 564 residues: Isocitrate dehydrogenase kinase/phosphatase (564 aa).

ATP contacts are provided by residues 315–321 and K336; that span reads APGVKGM. D371 is an active-site residue.

The protein belongs to the AceK family.

It localises to the cytoplasm. It catalyses the reaction L-seryl-[isocitrate dehydrogenase] + ATP = O-phospho-L-seryl-[isocitrate dehydrogenase] + ADP + H(+). In terms of biological role, bifunctional enzyme which can phosphorylate or dephosphorylate isocitrate dehydrogenase (IDH) on a specific serine residue. This is a regulatory mechanism which enables bacteria to bypass the Krebs cycle via the glyoxylate shunt in response to the source of carbon. When bacteria are grown on glucose, IDH is fully active and unphosphorylated, but when grown on acetate or ethanol, the activity of IDH declines drastically concomitant with its phosphorylation. The chain is Isocitrate dehydrogenase kinase/phosphatase from Idiomarina loihiensis (strain ATCC BAA-735 / DSM 15497 / L2-TR).